The sequence spans 464 residues: Olfactomedin (464 aa).

The N-terminal stretch at 1-16 (MYICLLTLVLIHAAAA) is a signal peptide. N-linked (GlcNAc...) asparagine glycosylation is found at N21, N85, N143, N228, N279, and N383. An Olfactomedin-like domain is found at 192-464 (SCQHQGLAHI…LLHYDIALKP (273 aa)). An intrachain disulfide couples C193 to C394.

Oligomer; disulfide-linked. Most, if not all, of the six potential sites for N-glycosylation carry carbohydrate moieties of 8-10 sugar residues. As to expression, expressed exclusively in olfactory neuroepithelium.

It localises to the secreted. Its subcellular location is the extracellular space. May influence the maintenance, growth, or differentiation of chemosensory cilia on the apical dendrites of olfactory neurons. Major component of the extracellular matrix of the olfactory neuroepithelium. This Aquarana catesbeiana (American bullfrog) protein is Olfactomedin.